We begin with the raw amino-acid sequence, 220 residues long: Fructose-6-phosphate aldolase (220 aa).

The active-site Schiff-base intermediate with substrate is Lys-85.

Belongs to the transaldolase family. Type 3A subfamily. In terms of assembly, homodecamer.

The protein resides in the cytoplasm. It carries out the reaction beta-D-fructose 6-phosphate = dihydroxyacetone + D-glyceraldehyde 3-phosphate. In terms of biological role, catalyzes the reversible formation of fructose 6-phosphate from dihydroxyacetone and D-glyceraldehyde 3-phosphate via an aldolization reaction. This is Fructose-6-phosphate aldolase from Salmonella choleraesuis (strain SC-B67).